A 224-amino-acid chain; its full sequence is Charged multivesicular body protein 4c (224 aa).

Disordered stretches follow at residues 1–21 (MSVFGKLFGGGGKGGKGPTPQ) and 182–224 (SGPE…AWAM). The span at 7–17 (LFGGGGKGGKG) shows a compositional bias: gly residues. Residues 21–221 (QEAIQKLRET…DEDDMEELKA (201 aa)) adopt a coiled-coil conformation.

It belongs to the SNF7 family. In terms of assembly, probable core component of the endosomal sorting required for transport complex III (ESCRT-III). ESCRT-III components are thought to multimerize to form a flat lattice on the perimeter membrane of the endosome.

The protein resides in the cytoplasm. Its subcellular location is the cytosol. The protein localises to the late endosome membrane. Probable core component of the endosomal sorting required for transport complex III (ESCRT-III) which is involved in multivesicular bodies (MVBs) formation and sorting of endosomal cargo proteins into MVBs. MVBs contain intraluminal vesicles (ILVs) that are generated by invagination and scission from the limiting membrane of the endosome and mostly are delivered to lysosomes enabling degradation of membrane proteins, such as stimulated growth factor receptors, lysosomal enzymes and lipids. Key component of the cytokinesis checkpoint, a process required to delay abscission to prevent both premature resolution of intercellular chromosome bridges and accumulation of DNA damage. This Danio rerio (Zebrafish) protein is Charged multivesicular body protein 4c (chmp4c).